Here is a 173-residue protein sequence, read N- to C-terminus: Lipoprotein signal peptidase (173 aa).

3 helical membrane-spanning segments follow: residues 12–32 (WLWL…WTIQ), 67–87 (WQRY…VYLL), and 102–122 (ALIL…GYVI). Residues Asp-123 and Asp-141 contribute to the active site. The helical transmembrane segment at 137–157 (FNIADSAIFTGAVIMIFESFF) threads the bilayer.

The protein belongs to the peptidase A8 family.

Its subcellular location is the cell inner membrane. The enzyme catalyses Release of signal peptides from bacterial membrane prolipoproteins. Hydrolyzes -Xaa-Yaa-Zaa-|-(S,diacylglyceryl)Cys-, in which Xaa is hydrophobic (preferably Leu), and Yaa (Ala or Ser) and Zaa (Gly or Ala) have small, neutral side chains.. It functions in the pathway protein modification; lipoprotein biosynthesis (signal peptide cleavage). In terms of biological role, this protein specifically catalyzes the removal of signal peptides from prolipoproteins. The protein is Lipoprotein signal peptidase of Psychromonas ingrahamii (strain DSM 17664 / CCUG 51855 / 37).